The sequence spans 103 residues: Small ribosomal subunit protein uS10 (103 aa).

Belongs to the universal ribosomal protein uS10 family. As to quaternary structure, part of the 30S ribosomal subunit.

Its function is as follows. Involved in the binding of tRNA to the ribosomes. The protein is Small ribosomal subunit protein uS10 of Magnetococcus marinus (strain ATCC BAA-1437 / JCM 17883 / MC-1).